Consider the following 409-residue polypeptide: Argininosuccinate synthase (409 aa).

ATP contacts are provided by residues 12-20 and Ala39; that span reads AYSGGLDTS. Positions 90 and 95 each coordinate L-citrulline. Residue Gly120 participates in ATP binding. Positions 122, 126, and 127 each coordinate L-aspartate. Asn126 contributes to the L-citrulline binding site. L-citrulline contacts are provided by Arg130, Ser181, Ser190, Glu266, and Tyr278.

Belongs to the argininosuccinate synthase family. Type 1 subfamily. Homotetramer.

The protein localises to the cytoplasm. It catalyses the reaction L-citrulline + L-aspartate + ATP = 2-(N(omega)-L-arginino)succinate + AMP + diphosphate + H(+). Its pathway is amino-acid biosynthesis; L-arginine biosynthesis; L-arginine from L-ornithine and carbamoyl phosphate: step 2/3. This Acidiphilium cryptum (strain JF-5) protein is Argininosuccinate synthase.